The primary structure comprises 717 residues: Mitotic spindle assembly checkpoint protein MAD1 (717 aa).

Methionine 1 carries the post-translational modification N-acetylmethionine. The residue at position 16 (serine 16) is a Phosphoserine. Residues 46–631 (EQSMQLEERA…QTKIQEFRKV (586 aa)) are a coiled coil. Position 61 is an N6-acetyllysine; alternate (lysine 61). Residue lysine 61 forms a Glycyl lysine isopeptide (Lys-Gly) (interchain with G-Cter in SUMO2); alternate linkage. The Nuclear localization signal motif lies at 79–82 (KRAR). A phosphoserine mark is found at serine 214 and serine 428. The interval 380-532 (LLEERKKREI…EMQMERLTLQ (153 aa)) is necessary for interaction with NEK2. The tract at residues 540–551 (TKVLHMSLNPAS) is necessary for interaction with MAD2L1.

The protein belongs to the MAD1 family. In terms of assembly, homodimer. Dimerizes via its N- and C- terminal regions. Heterodimerizes with MAD2L1 in order to form a tetrameric MAD1L1-MAD2L1 core complex. Interacts with the closed conformation form of MAD2L1 (C-MAD2) and open conformation form of MAD2L1 (O-MAD2). It is unclear whether MAD1L1 dimerization promotes the conversion of closed to open conformation of MAD2L1. Formation of a heterotetrameric core complex containing two molecules each of MAD1L1 and of MAD2L1 promotes binding of another molecule of MAD2L1 to each MAD2L1, resulting in a heterohexamer. Perturbation of the original MAD1L1-MAD2L1 structure by the spindle checkpoint may decrease MAD2L1 affinity for MAD1L1. CDC20 can compete with MAD1L1 for MAD2L1 binding, until the attachment and/or tension dampen the checkpoint signal, preventing further release of MAD2L1 on to CDC20. Also able to interact with the BUB1/BUB3 complex. Interacts with NEK2. Interacts with TTK. Interacts with TPR; the interactions occurs in a microtubule-independent manner. Interacts with IK. Interacts with the viral Tax protein. Interacts with PRAP1. Phosphorylated; by BUB1. Become hyperphosphorylated in late S through M phases or after mitotic spindle damage.

It is found in the nucleus. The protein resides in the chromosome. It localises to the centromere. The protein localises to the kinetochore. Its subcellular location is the nucleus envelope. It is found in the cytoplasm. The protein resides in the cytoskeleton. It localises to the microtubule organizing center. The protein localises to the centrosome. Its subcellular location is the spindle. It is found in the spindle pole. Component of the spindle-assembly checkpoint that prevents the onset of anaphase until all chromosomes are properly aligned at the metaphase plate. Forms a heterotetrameric complex with the closed conformation form of MAD2L1 (C-MAD2) at unattached kinetochores during prometaphase, recruits an open conformation of MAD2L1 (O-MAD2) and promotes the conversion of O-MAD2 to C-MAD2, which ensures mitotic checkpoint signaling. In Cricetulus griseus (Chinese hamster), this protein is Mitotic spindle assembly checkpoint protein MAD1 (MAD1L1).